We begin with the raw amino-acid sequence, 455 residues long: Bifunctional protein GlmU (455 aa).

Residues 1 to 226 (MGLSVVILAA…EFEILGVNDR (226 aa)) form a pyrophosphorylase region. UDP-N-acetyl-alpha-D-glucosamine contacts are provided by residues 8–11 (LAAG), lysine 22, glutamine 73, 78–79 (GT), 99–101 (YGD), glycine 136, glutamate 151, asparagine 166, and asparagine 224. Position 101 (aspartate 101) interacts with Mg(2+). Asparagine 224 is a binding site for Mg(2+). Positions 227 to 247 (TQLASLERVWQRNVAEKIMAK) are linker. Residues 248-455 (GVSIADPNRF…WQRSVKKTDK (208 aa)) form an N-acetyltransferase region. UDP-N-acetyl-alpha-D-glucosamine contacts are provided by arginine 330 and lysine 348. The Proton acceptor role is filled by histidine 360. Residues tyrosine 363 and asparagine 374 each coordinate UDP-N-acetyl-alpha-D-glucosamine. Residues alanine 377, 383–384 (NY), serine 402, alanine 420, and arginine 437 contribute to the acetyl-CoA site.

The protein in the N-terminal section; belongs to the N-acetylglucosamine-1-phosphate uridyltransferase family. It in the C-terminal section; belongs to the transferase hexapeptide repeat family. In terms of assembly, homotrimer. Requires Mg(2+) as cofactor.

The protein localises to the cytoplasm. It catalyses the reaction alpha-D-glucosamine 1-phosphate + acetyl-CoA = N-acetyl-alpha-D-glucosamine 1-phosphate + CoA + H(+). The catalysed reaction is N-acetyl-alpha-D-glucosamine 1-phosphate + UTP + H(+) = UDP-N-acetyl-alpha-D-glucosamine + diphosphate. Its pathway is nucleotide-sugar biosynthesis; UDP-N-acetyl-alpha-D-glucosamine biosynthesis; N-acetyl-alpha-D-glucosamine 1-phosphate from alpha-D-glucosamine 6-phosphate (route II): step 2/2. It participates in nucleotide-sugar biosynthesis; UDP-N-acetyl-alpha-D-glucosamine biosynthesis; UDP-N-acetyl-alpha-D-glucosamine from N-acetyl-alpha-D-glucosamine 1-phosphate: step 1/1. The protein operates within bacterial outer membrane biogenesis; LPS lipid A biosynthesis. Catalyzes the last two sequential reactions in the de novo biosynthetic pathway for UDP-N-acetylglucosamine (UDP-GlcNAc). The C-terminal domain catalyzes the transfer of acetyl group from acetyl coenzyme A to glucosamine-1-phosphate (GlcN-1-P) to produce N-acetylglucosamine-1-phosphate (GlcNAc-1-P), which is converted into UDP-GlcNAc by the transfer of uridine 5-monophosphate (from uridine 5-triphosphate), a reaction catalyzed by the N-terminal domain. This Francisella tularensis subsp. tularensis (strain SCHU S4 / Schu 4) protein is Bifunctional protein GlmU.